Reading from the N-terminus, the 181-residue chain is Ribulose bisphosphate carboxylase small subunit, chloroplastic (181 aa).

The transit peptide at 1–54 directs the protein to the chloroplast; it reads MASSMLSSAAVVTSQLQATMVAPFTGLKSSAAFPVTRKTNTDITSIASNGGRVS.

It belongs to the RuBisCO small chain family. As to quaternary structure, heterohexadecamer of 8 large and 8 small subunits.

The protein localises to the plastid. It is found in the chloroplast. Its function is as follows. RuBisCO catalyzes two reactions: the carboxylation of D-ribulose 1,5-bisphosphate, the primary event in carbon dioxide fixation, as well as the oxidative fragmentation of the pentose substrate. Both reactions occur simultaneously and in competition at the same active site. Although the small subunit is not catalytic it is essential for maximal activity. The sequence is that of Ribulose bisphosphate carboxylase small subunit, chloroplastic from Raphanus sativus (Radish).